Consider the following 1022-residue polypeptide: Translation initiation factor IF-2 (1022 aa).

Residues glutamate 82–leucine 94 are compositionally biased toward basic and acidic residues. Disordered regions lie at residues glutamate 82–alanine 129 and serine 342–leucine 436. Over residues alanine 104–alanine 115 the composition is skewed to low complexity. Residues lysine 375–lysine 384 are compositionally biased toward basic residues. The span at serine 421–leucine 436 shows a compositional bias: basic and acidic residues. In terms of domain architecture, tr-type G spans threonine 519 to lysine 689. Positions glycine 528 to threonine 535 are G1. GTP is bound at residue glycine 528–threonine 535. The interval glycine 553–histidine 557 is G2. A G3 region spans residues aspartate 575 to glycine 578. Residues aspartate 575–histidine 579 and asparagine 629–aspartate 632 contribute to the GTP site. The tract at residues asparagine 629 to aspartate 632 is G4. The interval serine 665 to lysine 667 is G5.

The protein belongs to the TRAFAC class translation factor GTPase superfamily. Classic translation factor GTPase family. IF-2 subfamily.

The protein resides in the cytoplasm. One of the essential components for the initiation of protein synthesis. Protects formylmethionyl-tRNA from spontaneous hydrolysis and promotes its binding to the 30S ribosomal subunits. Also involved in the hydrolysis of GTP during the formation of the 70S ribosomal complex. The polypeptide is Translation initiation factor IF-2 (Chlorobium chlorochromatii (strain CaD3)).